We begin with the raw amino-acid sequence, 320 residues long: ATP-dependent 6-phosphofructokinase (320 aa).

Position 12 (glycine 12) interacts with ATP. ADP-binding positions include arginine 22–arginine 26 and arginine 55–aspartate 60. Residues arginine 73–phenylalanine 74 and glycine 103–serine 106 contribute to the ATP site. Position 104 (aspartate 104) interacts with Mg(2+). Residue threonine 126–aspartate 128 coordinates substrate. The Proton acceptor role is filled by aspartate 128. Arginine 155 contributes to the ADP binding site. Substrate contacts are provided by residues arginine 163 and methionine 170 to arginine 172. Residues glycine 186 to glutamate 188, lysine 212, and lysine 214 to histidine 216 contribute to the ADP site. Residues glutamate 223, arginine 244, and histidine 250–arginine 253 each bind substrate.

Belongs to the phosphofructokinase type A (PFKA) family. ATP-dependent PFK group I subfamily. Prokaryotic clade 'B1' sub-subfamily. Homotetramer. Requires Mg(2+) as cofactor.

Its subcellular location is the cytoplasm. The catalysed reaction is beta-D-fructose 6-phosphate + ATP = beta-D-fructose 1,6-bisphosphate + ADP + H(+). Its pathway is carbohydrate degradation; glycolysis; D-glyceraldehyde 3-phosphate and glycerone phosphate from D-glucose: step 3/4. With respect to regulation, allosterically activated by ADP and other diphosphonucleosides, and allosterically inhibited by phosphoenolpyruvate. Functionally, catalyzes the phosphorylation of D-fructose 6-phosphate to fructose 1,6-bisphosphate by ATP, the first committing step of glycolysis. The polypeptide is ATP-dependent 6-phosphofructokinase (Serratia proteamaculans (strain 568)).